A 494-amino-acid chain; its full sequence is Protein DETOXIFICATION 22 (494 aa).

The next 12 membrane-spanning stretches (helical) occupy residues L40–V60, I78–L98, I123–L143, I159–F179, I188–V208, G217–V237, G268–L288, A299–V319, I340–L360, L384–G404, L416–L436, and V441–L461.

It belongs to the multi antimicrobial extrusion (MATE) (TC 2.A.66.1) family.

It localises to the membrane. This Arabidopsis thaliana (Mouse-ear cress) protein is Protein DETOXIFICATION 22.